We begin with the raw amino-acid sequence, 15639 residues long: FR901469 synthetase (15639 aa).

The 77-residue stretch at His5 to Gln81 folds into the Carrier 1 domain. At Ser42 the chain carries O-(pantetheine 4'-phosphoryl)serine. Acidic residues predominate over residues Leu82–Asn94. Residues Leu82–Leu105 form a disordered region. The segment at Pro140–Asp553 is condensation 1. Residues Thr579–Ile971 form an adenylation 1 region. A Carrier 2 domain is found at Thr1108–Thr1184. The residue at position 1145 (Ser1145) is an O-(pantetheine 4'-phosphoryl)serine. The interval Arg1219–Ala1626 is epimerase 1. A condensation 2 region spans residues Glu1667–Asn2097. The segment at Gln2122–Arg2518 is adenylation 2. The 77-residue stretch at Val2654 to Thr2730 folds into the Carrier 3 domain. Ser2691 carries the post-translational modification O-(pantetheine 4'-phosphoryl)serine. An epimerase 2 region spans residues Val2761 to Met3176. Residues Gln3215 to Asp3640 are condensation 3. Residues Thr3669–Ile4059 form an adenylation 3 region. One can recognise a Carrier 4 domain in the interval Pro4193–Gly4269. The residue at position 4230 (Ser4230) is an O-(pantetheine 4'-phosphoryl)serine. Residues Glu4316–Glu4714 form a condensation 4 region. The tract at residues Thr4756–Arg5149 is adenylation 4. Positions Glu5284–Thr5360 constitute a Carrier 5 domain. An O-(pantetheine 4'-phosphoryl)serine modification is found at Ser5321. The tract at residues Glu5402 to Ser5802 is condensation 5. Positions Lys5847–Val6238 are adenylation 5. One can recognise a Carrier 6 domain in the interval Gln6375–Val6451. Position 6412 is an O-(pantetheine 4'-phosphoryl)serine (Ser6412). The tract at residues Glu6494–Ser6889 is condensation 6. The tract at residues Trp6952 to Arg7335 is adenylation 6. One can recognise a Carrier 7 domain in the interval Thr7473 to Glu7546. O-(pantetheine 4'-phosphoryl)serine is present on Ser7507. The interval Met7580–Gln7992 is epimerase 3. A condensation 7 region spans residues Glu8034 to Ser8459. Residues Gln8486–Arg8882 are adenylation 7. In terms of domain architecture, Carrier 8 spans Gln9015–Glu9091. O-(pantetheine 4'-phosphoryl)serine is present on Ser9052. The interval Glu9136 to Asp9535 is condensation 8. Residues Lys9583 to Arg9974 are adenylation 8. The 77-residue stretch at Glu10110–Ile10186 folds into the Carrier 9 domain. Ser10147 carries the post-translational modification O-(pantetheine 4'-phosphoryl)serine. The interval Ile10186 to Glu10208 is disordered. Residues Asp10187–Val10206 are compositionally biased toward acidic residues. Positions Val10240 to Ile10662 are condensation 9. The adenylation 9 stretch occupies residues Lys10683 to Arg11082. The region spanning Glu11217–Gly11293 is the Carrier 10 domain. Ser11254 bears the O-(pantetheine 4'-phosphoryl)serine mark. A condensation 10 region spans residues Glu11329 to Val11725. Residues Phe11770–Arg12165 form an adenylation 10 region. Positions Glu12298–Ile12374 constitute a Carrier 11 domain. Residue Ser12335 is modified to O-(pantetheine 4'-phosphoryl)serine. A condensation 11 region spans residues Glu12418–Gln12830. The interval Ser12861–Arg13249 is adenylation 11. The Carrier 12 domain maps to Met13383–Val13459. The residue at position 13420 (Ser13420) is an O-(pantetheine 4'-phosphoryl)serine. The epimerase 4 stretch occupies residues Ala13476 to Gln13901. Residues Glu13940 to Gln14369 form a condensation 12 region. The segment at Arg14390–Arg14789 is adenylation 12. Residues Leu14916–Arg14992 form the Carrier 13 domain. Ser14953 carries the O-(pantetheine 4'-phosphoryl)serine modification. Residues Gln15062 to Gln15433 are condensation 13. Disordered stretches follow at residues Glu15434–Gln15511 and Val15617–Ile15639. The segment covering Asn15455 to Gly15472 has biased composition (low complexity). The segment covering Ala15482–Lys15494 has biased composition (basic and acidic residues). Polar residues predominate over residues Val15495–Gln15511.

Belongs to the NRP synthetase family.

It participates in antifungal biosynthesis. Nonribosomal peptide synthetase; part of the gene cluster that mediates the biosynthesis of the antifungal antibiotic FR901469, an inhibitor of beta-1,3-glucansynthase, exerting antifungal activity against the pathogenes Candida albicans and Aspergillus fumigatus. FR901469 is a cyclic depsipeptide containing 12 amino acid residues and a fatty acid chain. The NRPS frbI contains 12 modules responsible for the formation of the depsipeptide backbone which is denoted as Acyl-Thr-Ala-Tyr-Val-4OHPro-Thr-Thr-3OHPro-threo3OHGln-Gly-Thr-Orn-OH (C71H116N14O23). The PKS frbB is probably involved in the production of the hydrocarbon chain, and the acyl-CoA ligase frbC might be involved in the transport of the chain to the peptide ptoduct of frbI. Because FR901469 contains 3 hydroxylated amino acid residues, the 3 oxygenases frbA, frbH, and frbJ might be participating in amino acid hydroxylation. As no thioesterase domains were detected in frbI or frbB, the thioesterases frbD and frbE may instead release and cyclize the products of the NRPS and PKS, respectively. The polypeptide is FR901469 synthetase (Dothideomycetidae sp. (strain 11243) (Fungal sp. (strain No.11243))).